Consider the following 372-residue polypeptide: Fork head domain-containing protein FD4 (372 aa).

A DNA-binding region (fork-head) is located at residues 12 to 103 (QKPPYSYISL…FDMFENGSLL (92 aa)). Disordered stretches follow at residues 225-245 (ESLI…DEDD) and 261-281 (PTTP…RTED).

Expressed in early embryogenesis in 14 symmetrical pairs of segmentally arranged neuroblasts. Also, later in embryogenesis, in a cluster of cells in head region.

It localises to the nucleus. Functionally, involved in development during embryogenesis. The chain is Fork head domain-containing protein FD4 (fd96Ca) from Drosophila melanogaster (Fruit fly).